Reading from the N-terminus, the 150-residue chain is UPF0178 protein Reut_B5138 (150 aa).

It belongs to the UPF0178 family.

This Cupriavidus pinatubonensis (strain JMP 134 / LMG 1197) (Cupriavidus necator (strain JMP 134)) protein is UPF0178 protein Reut_B5138.